The primary structure comprises 151 residues: D-aminoacyl-tRNA deacylase (151 aa).

A Gly-cisPro motif, important for rejection of L-amino acids motif is present at residues 137-138 (GP).

It belongs to the DTD family. As to quaternary structure, homodimer.

The protein localises to the cytoplasm. The enzyme catalyses glycyl-tRNA(Ala) + H2O = tRNA(Ala) + glycine + H(+). The catalysed reaction is a D-aminoacyl-tRNA + H2O = a tRNA + a D-alpha-amino acid + H(+). In terms of biological role, an aminoacyl-tRNA editing enzyme that deacylates mischarged D-aminoacyl-tRNAs. Also deacylates mischarged glycyl-tRNA(Ala), protecting cells against glycine mischarging by AlaRS. Acts via tRNA-based rather than protein-based catalysis; rejects L-amino acids rather than detecting D-amino acids in the active site. By recycling D-aminoacyl-tRNA to D-amino acids and free tRNA molecules, this enzyme counteracts the toxicity associated with the formation of D-aminoacyl-tRNA entities in vivo and helps enforce protein L-homochirality. This is D-aminoacyl-tRNA deacylase from Acaryochloris marina (strain MBIC 11017).